The chain runs to 239 residues: 1-(5-phosphoribosyl)-5-[(5-phosphoribosylamino)methylideneamino] imidazole-4-carboxamide isomerase (239 aa).

The Proton acceptor role is filled by aspartate 8. The Proton donor role is filled by aspartate 129.

It belongs to the HisA/HisF family.

It localises to the cytoplasm. It carries out the reaction 1-(5-phospho-beta-D-ribosyl)-5-[(5-phospho-beta-D-ribosylamino)methylideneamino]imidazole-4-carboxamide = 5-[(5-phospho-1-deoxy-D-ribulos-1-ylimino)methylamino]-1-(5-phospho-beta-D-ribosyl)imidazole-4-carboxamide. Its pathway is amino-acid biosynthesis; L-histidine biosynthesis; L-histidine from 5-phospho-alpha-D-ribose 1-diphosphate: step 4/9. The chain is 1-(5-phosphoribosyl)-5-[(5-phosphoribosylamino)methylideneamino] imidazole-4-carboxamide isomerase from Bacillus thuringiensis (strain Al Hakam).